Consider the following 276-residue polypeptide: tRNA dimethylallyltransferase (276 aa).

Residues 9–12 (DSLS) are interaction with substrate tRNA.

Belongs to the IPP transferase family. As to quaternary structure, monomer. Requires Mg(2+) as cofactor.

It carries out the reaction adenosine(37) in tRNA + dimethylallyl diphosphate = N(6)-dimethylallyladenosine(37) in tRNA + diphosphate. Functionally, catalyzes the transfer of a dimethylallyl group onto the adenine at position 37 in tRNAs that read codons beginning with uridine, leading to the formation of N6-(dimethylallyl)adenosine (i(6)A). The polypeptide is tRNA dimethylallyltransferase (miaA) (Helicobacter pylori (strain G27)).